A 349-amino-acid chain; its full sequence is tRNA N6-adenosine threonylcarbamoyltransferase (349 aa).

Fe cation is bound by residues histidine 117, histidine 121, and tyrosine 138. Substrate is bound by residues 138-142, aspartate 170, aspartate 191, and asparagine 271; that span reads YVAGG. Fe cation is bound at residue aspartate 299.

It belongs to the KAE1 / TsaD family. It depends on Fe(2+) as a cofactor.

Its subcellular location is the cytoplasm. The enzyme catalyses L-threonylcarbamoyladenylate + adenosine(37) in tRNA = N(6)-L-threonylcarbamoyladenosine(37) in tRNA + AMP + H(+). Functionally, required for the formation of a threonylcarbamoyl group on adenosine at position 37 (t(6)A37) in tRNAs that read codons beginning with adenine. Is probably involved in the transfer of the threonylcarbamoyl moiety of threonylcarbamoyl-AMP (TC-AMP) to the N6 group of A37. This chain is tRNA N6-adenosine threonylcarbamoyltransferase, found in Aeropyrum pernix (strain ATCC 700893 / DSM 11879 / JCM 9820 / NBRC 100138 / K1).